The primary structure comprises 276 residues: Large ribosomal subunit protein uL2 (276 aa).

Residues 208-276 form a disordered region; the sequence is KAGRNRHRGI…KLIISRRKGK (69 aa). Residues 230 to 240 show a composition bias toward basic and acidic residues; it reads DHPHGGGEGKK. Positions 255 to 276 are enriched in basic residues; sequence KGAKTRRKKASDKLIISRRKGK.

Belongs to the universal ribosomal protein uL2 family. In terms of assembly, part of the 50S ribosomal subunit. Forms a bridge to the 30S subunit in the 70S ribosome.

Its function is as follows. One of the primary rRNA binding proteins. Required for association of the 30S and 50S subunits to form the 70S ribosome, for tRNA binding and peptide bond formation. It has been suggested to have peptidyltransferase activity; this is somewhat controversial. Makes several contacts with the 16S rRNA in the 70S ribosome. The chain is Large ribosomal subunit protein uL2 from Campylobacter lari (strain RM2100 / D67 / ATCC BAA-1060).